The following is a 178-amino-acid chain: Large ribosomal subunit protein uL6 (178 aa).

It belongs to the universal ribosomal protein uL6 family. As to quaternary structure, part of the 50S ribosomal subunit.

Functionally, this protein binds to the 23S rRNA, and is important in its secondary structure. It is located near the subunit interface in the base of the L7/L12 stalk, and near the tRNA binding site of the peptidyltransferase center. This is Large ribosomal subunit protein uL6 from Streptococcus suis (strain 05ZYH33).